The chain runs to 545 residues: Dual specificity calcium/calmodulin-dependent 3',5'-cyclic nucleotide phosphodiesterase 1A (545 aa).

Calmodulin-binding stretches follow at residues 24–44 and 114–137; these read TEKM…QLEK and EKPK…MYRK. The PDEase domain maps to 142–522; it reads VGLTYPAAVI…ERWKELAAQG (381 aa). The Proton donor role is filled by His-219. Residues His-223, His-259, Asp-260, and Asp-366 each contribute to the Zn(2+) site. Asp-260 lines the Mg(2+) pocket. The tract at residues 526–545 is disordered; it reads LHKNSEELGNTEEKHADTRP.

The protein belongs to the cyclic nucleotide phosphodiesterase family. PDE1 subfamily. As to quaternary structure, homodimer. Interacts with YWHAZ. It depends on Zn(2+) as a cofactor. Mg(2+) is required as a cofactor. Expressed in brain, kidney and testis.

The protein resides in the cell projection. It is found in the cilium. It localises to the flagellum. It catalyses the reaction a nucleoside 3',5'-cyclic phosphate + H2O = a nucleoside 5'-phosphate + H(+). The catalysed reaction is 3',5'-cyclic GMP + H2O = GMP + H(+). It carries out the reaction 3',5'-cyclic AMP + H2O = AMP + H(+). With respect to regulation, type I PDE are activated by the binding of calmodulin in the presence of Ca(2+). Activated by the binding of calmodulin in the presence of Ca(2+). Calcium/calmodulin-dependent cyclic nucleotide phosphodiesterase with a dual specificity for the second messengers cGMP and cAMP, which are key regulators of many important physiological processes. Has a higher efficiency with cGMP compared to cAMP. The chain is Dual specificity calcium/calmodulin-dependent 3',5'-cyclic nucleotide phosphodiesterase 1A from Mus musculus (Mouse).